The sequence spans 241 residues: Small ribosomal subunit protein uS2 (241 aa).

Belongs to the universal ribosomal protein uS2 family.

This is Small ribosomal subunit protein uS2 from Glaesserella parasuis serovar 5 (strain SH0165) (Haemophilus parasuis).